Reading from the N-terminus, the 278-residue chain is MLVAEGGANILLELDHRGVLYRCNVRDKSLKVNNEYTYKNYRYINQVVRPLLGDCIPEMELVDIPYDRISGIIGDFVGDPDSDHVSALTIKNLRPTNVYGEKIRYDDHFTKVYHDDTMEHILVEIKPKWLHHAKFCRNCTHNNLKNRKIPYCYALMVVDPSHVSDMLLHTGIAFPRKFLIKFVDYFSKSDNILAKLHDIQKNLDSNVSMNDIKSIDDVSDAFLLNMTLKDVSCFIEWTREPDSLEVNVVDVDMKLVSKLDHWVNTHIQLSNSSNLVHH.

The EXKPK motif signature appears at 124–128 (EIKPK).

The protein belongs to the IPK1 type 1 family.

It localises to the nucleus. The catalysed reaction is 1D-myo-inositol 1,3,4,5,6-pentakisphosphate + ATP = 1D-myo-inositol hexakisphosphate + ADP + H(+). Functionally, has kinase activity and phosphorylates inositol-1,3,4,5,6-pentakisphosphate (Ins(1,3,4,5,6)P5) to produce 1,2,3,4,5,6-hexakisphosphate (InsP6), also known as phytate. In Candida glabrata (strain ATCC 2001 / BCRC 20586 / JCM 3761 / NBRC 0622 / NRRL Y-65 / CBS 138) (Yeast), this protein is Inositol-pentakisphosphate 2-kinase (IPK1).